The chain runs to 921 residues: Isoleucine--tRNA ligase (921 aa).

The 'HIGH' region signature appears at 57-67; it reads PYANGELHMGH. Glutamate 552 contributes to the L-isoleucyl-5'-AMP binding site. The 'KMSKS' region motif lies at 593–597; the sequence is KMSKS. Lysine 596 serves as a coordination point for ATP. The Zn(2+) site is built by cysteine 888, cysteine 891, cysteine 908, and cysteine 911.

It belongs to the class-I aminoacyl-tRNA synthetase family. IleS type 1 subfamily. In terms of assembly, monomer. The cofactor is Zn(2+).

Its subcellular location is the cytoplasm. It carries out the reaction tRNA(Ile) + L-isoleucine + ATP = L-isoleucyl-tRNA(Ile) + AMP + diphosphate. Catalyzes the attachment of isoleucine to tRNA(Ile). As IleRS can inadvertently accommodate and process structurally similar amino acids such as valine, to avoid such errors it has two additional distinct tRNA(Ile)-dependent editing activities. One activity is designated as 'pretransfer' editing and involves the hydrolysis of activated Val-AMP. The other activity is designated 'posttransfer' editing and involves deacylation of mischarged Val-tRNA(Ile). The chain is Isoleucine--tRNA ligase from Listeria innocua serovar 6a (strain ATCC BAA-680 / CLIP 11262).